The following is a 387-amino-acid chain: MAVIKMTDLDLAGKRVFIRSDLNVPVKDGKVTSDARIRASLPTIEDSLKQGARVMVTSHLGRPTEGEYNAEFSLQPVVDYLENKLSAPVRLAKDYLDGVDVAEGELVVLENVRFNKGEKKDDEALAKKYAALCDVFVMDAFGTAHRAQASTHGVGKFAAVACAGPLLFNELEALGKALDNPARPMVAIVGGSKVSTKLTVLDSLSKIADQLIVGGGIANTFVAAQGHNVGKSLYEADLISEAKRLLESSDIPVPTDVRVATEFSETATATLKSTSEIQDSEQILDLGDVSVARLAEILKNAKTILWNGPVGVFEFANFRKGTEVVARAIADSEAFSIAGGGDTLAAIDLFGIADQISYISTGGGAFLEFVEGKKLPAVVMLEERAKQ.

Substrate is bound by residues 21–23 (DLN), R36, 59–62 (HLGR), R113, and R146. ATP contacts are provided by residues K197, E314, and 340-343 (GGDT).

The protein belongs to the phosphoglycerate kinase family. In terms of assembly, monomer.

The protein localises to the cytoplasm. The catalysed reaction is (2R)-3-phosphoglycerate + ATP = (2R)-3-phospho-glyceroyl phosphate + ADP. Its pathway is carbohydrate degradation; glycolysis; pyruvate from D-glyceraldehyde 3-phosphate: step 2/5. This Sodalis glossinidius (strain morsitans) protein is Phosphoglycerate kinase.